We begin with the raw amino-acid sequence, 557 residues long: Tight junction-associated protein 1 (557 aa).

Residues 1–37 (MTSAAPAKKPYRKAPPEHRELRLEIPGSRLEQEEPLT) form a disordered region. Thr2 is modified (N-acetylthreonine). Residues 14–23 (APPEHRELRL) show a composition bias toward basic and acidic residues. Residues 42 to 171 (MKLLQEENEE…EELNERYRLD (130 aa)) adopt a coiled-coil conformation. Disordered stretches follow at residues 266–303 (MSEG…SPEE) and 309–328 (AFEK…LYPG). Pro residues predominate over residues 274 to 286 (PASPPAPGSPTPQ). Residue Ser300 is modified to Phosphoserine. The span at 316 to 325 (YPTPSPPHPL) shows a compositional bias: pro residues. A Phosphothreonine modification is found at Thr318. A phosphoserine mark is found at Ser320 and Ser345. The segment at 364-409 (EEGSERARPSPVPSTPASAQASPHHQPSPAPLTLSAPASSASSEED) is disordered. Residues 378–388 (TPASAQASPHH) are compositionally biased toward polar residues. The span at 394-405 (PLTLSAPASSAS) shows a compositional bias: low complexity. A Phosphothreonine modification is found at Thr422. A compositionally biased stretch (basic and acidic residues) spans 439–456 (LPELQRHFAHSPADRDEV). Residues 439 to 557 (LPELQRHFAH…QAQEQGNLLN (119 aa)) form a disordered region. Ser491 carries the post-translational modification Phosphoserine. Positions 530-542 (RSPKRMGVHHLHR) are enriched in basic residues. Ser545 is subject to Phosphoserine. A compositionally biased stretch (polar residues) spans 546 to 557 (LTQAQEQGNLLN).

Interacts with DLG1. Interacts with ARF6 (GTP-bound form). As to expression, ubiquitously expressed.

It is found in the golgi apparatus. Its subcellular location is the trans-Golgi network. The protein localises to the cell junction. The protein resides in the tight junction. It localises to the cell membrane. Functionally, plays a role in regulating the structure of the Golgi apparatus. The protein is Tight junction-associated protein 1 of Homo sapiens (Human).